Consider the following 85-residue polypeptide: UPF0512 protein U (85 aa).

Belongs to the UPF0512 family.

The sequence is that of UPF0512 protein U from Dictyostelium discoideum (Social amoeba).